A 44-amino-acid polypeptide reads, in one-letter code: Photosystem I reaction center subunit IX (44 aa).

A helical membrane pass occupies residues 7-27 (YLSTAPVLTTLWFGSLAGLLI).

The protein belongs to the PsaJ family.

Its subcellular location is the plastid. The protein resides in the chloroplast thylakoid membrane. May help in the organization of the PsaE and PsaF subunits. This Phalaenopsis aphrodite subsp. formosana (Moth orchid) protein is Photosystem I reaction center subunit IX.